Reading from the N-terminus, the 984-residue chain is MAIKNTLTGSGLLVLLTLACGTTVQSSPPTPAPRMYPNMNERPLSAESRLTPGTYRSELHIDLKSPQKTASQSSLAPTGDNNSKVESIIAGSDTTPRSAEGTSESPPVPQLGTPPRPAPRRSKGEGERQPPTAAPRTSRSVDTGSGSDASTEQQAGGQKVVTPIPASKGIYPSLDELRRSQESNVDAGSGTSTNEGGGTSEGPQVPQSGIPPRTGRRRAKARNRKRHPTPASRESSSEDENQPPTTASRPSNGEGESQPPTAAPRTSRSVDTGSGSDASTEQQAGGQKVVTPIPASKGIYPNLDELRQTQEGEESAPQPADVTWFSMSVPMGVVDRRVSRALKEQFFQFLQHLSADYPKQVQTVYEFLGWVADKLPENEEEVQMFIDALNTTEAMVGKAARWIFKAIPERERETIYSSFYQMFRDKLPKKFFETAEGMNPDVGQYFSAEEPVAVTPEIPAKSEEDSEAAETPTPLRRQANVAAQVLHPLPAKGVTRREWIPWPKMQNAISKAHGPLTRVPEWTPVTGSCALGDGYTDIDVTKATTDVLFRITLLILQQIRRKKTERGKLEDDQALVALCSAAGAFVDAWQHQQQALILEDPGTPKAHAQLIERLRNAGKYFMKSYDETTGESDHQQWKKNKAEVSKLGKSALMKSCVKYIKASGDVATRPFDSGTAKYPSRSLYGGIANTLETPFADSEAVAKAVHDYAKEHKKPEKLVGLCGALQISGYFKKCFSDAGRLSSVSFFHQHVDGASVLVRTLARERPIGRHALSQAICDPNISAQYFEGAFRLFSSTVSQEWEKENLFAQLASWTGKEMVLAPSLEEQAAVPPAQPAYETVYGDEEDRIYRIHVSGRHSSPQEVLYVGGIPSTVKPQQVHVLGPTVSDESRRMIHPVRHRSRTAPSSEAASTAAESSDEDPLPAENATAFLGVTPQEEESDAYKHTLDFDAVSPRKNKNKENRISAPLKQSDTLIEESTSKTSEL.

Residues 1 to 26 (MAIKNTLTGSGLLVLLTLACGTTVQS) form the signal peptide. The tract at residues 24 to 300 (VQSSPPTPAP…TPIPASKGIY (277 aa)) is disordered. 2 stretches are compositionally biased toward polar residues: residues 66–85 (PQKT…NSKV) and 92–105 (SDTT…TSES). A glycan (N-linked (GlcNAc...) asparagine) is linked at asparagine 81. The span at 106-117 (PPVPQLGTPPRP) shows a compositional bias: pro residues. Repeat 1 spans residues 129-172 (QPPTAAPRTSRSVDTGSGSDASTEQQAGGQKVVTPIPASKGIYP). Polar residues predominate over residues 135–156 (PRTSRSVDTGSGSDASTEQQAG). Residues 214 to 228 (TGRRRAKARNRKRHP) are compositionally biased toward basic residues. A compositionally biased stretch (polar residues) spans 242-285 (QPPTTASRPSNGEGESQPPTAAPRTSRSVDTGSGSDASTEQQAG). Residues 258–301 (QPPTAAPRTSRSVDTGSGSDASTEQQAGGQKVVTPIPASKGIYP) form repeat 2. Asparagine 390 and asparagine 780 each carry an N-linked (GlcNAc...) asparagine glycan. Residues 882–984 (GPTVSDESRR…EESTSKTSEL (103 aa)) are disordered. The span at 892 to 901 (MIHPVRHRSR) shows a compositional bias: basic residues. A compositionally biased stretch (low complexity) spans 902–914 (TAPSSEAASTAAE). Asparagine 925 is a glycosylation site (N-linked (GlcNAc...) asparagine). Positions 967–984 (LKQSDTLIEESTSKTSEL) are enriched in polar residues.

The protein localises to the secreted. Its subcellular location is the parasitophorous vacuole membrane. The sequence is that of Rhoptry neck protein 4 (RON4) from Toxoplasma gondii.